A 264-amino-acid chain; its full sequence is Thiazole synthase (264 aa).

Lys-104 serves as the catalytic Schiff-base intermediate with DXP. Residues Gly-165, 191–192 (AG), and 213–214 (NT) contribute to the 1-deoxy-D-xylulose 5-phosphate site.

The protein belongs to the ThiG family. In terms of assembly, homotetramer. Forms heterodimers with either ThiH or ThiS.

The protein resides in the cytoplasm. It carries out the reaction [ThiS sulfur-carrier protein]-C-terminal-Gly-aminoethanethioate + 2-iminoacetate + 1-deoxy-D-xylulose 5-phosphate = [ThiS sulfur-carrier protein]-C-terminal Gly-Gly + 2-[(2R,5Z)-2-carboxy-4-methylthiazol-5(2H)-ylidene]ethyl phosphate + 2 H2O + H(+). It functions in the pathway cofactor biosynthesis; thiamine diphosphate biosynthesis. In terms of biological role, catalyzes the rearrangement of 1-deoxy-D-xylulose 5-phosphate (DXP) to produce the thiazole phosphate moiety of thiamine. Sulfur is provided by the thiocarboxylate moiety of the carrier protein ThiS. In vitro, sulfur can be provided by H(2)S. This is Thiazole synthase from Oleidesulfovibrio alaskensis (strain ATCC BAA-1058 / DSM 17464 / G20) (Desulfovibrio alaskensis).